A 25-amino-acid polypeptide reads, in one-letter code: Alpha-amylase inhibitor (25 aa).

In terms of assembly, monomer or homodimer. In terms of processing, may exist both in a glycosylated and in an unglycosylated form.

Its subcellular location is the secreted. Its function is as follows. Inhibits alpha-amylases but not trypsin. Is more effective against insect alpha-amylases than those of mammals. This is Alpha-amylase inhibitor from Secale cereale (Rye).